The chain runs to 208 residues: Large ribosomal subunit protein uL4 (208 aa).

Residues 46–97 (QGTHKTKTRAEVRGGGKKPYRQKGTGNARQGSSRSPIMVGGGTIFGPQPRSY) form a disordered region. The segment covering 69 to 80 (GTGNARQGSSRS) has biased composition (polar residues).

The protein belongs to the universal ribosomal protein uL4 family. As to quaternary structure, part of the 50S ribosomal subunit.

Functionally, one of the primary rRNA binding proteins, this protein initially binds near the 5'-end of the 23S rRNA. It is important during the early stages of 50S assembly. It makes multiple contacts with different domains of the 23S rRNA in the assembled 50S subunit and ribosome. Forms part of the polypeptide exit tunnel. This is Large ribosomal subunit protein uL4 from Chlorobaculum parvum (strain DSM 263 / NCIMB 8327) (Chlorobium vibrioforme subsp. thiosulfatophilum).